The primary structure comprises 413 residues: MFKSFDGLKLSNSELEGRYIIANRDIDIGESILKCKSYFAVTCEDFKKNSCYNCIKLIKSPSPQQVPRCFGCNEVWYCSEKCKQDNQAKHQHYECAFFNNIKSPKLIQNSKLDFDSYSEIRIILGLLSRYYQDKLLNNKFNSSIIINNQQDDEEDFIKDTLDGVLDLVENDINEETNSVAKEYIDNIIEYIINILKLTINNNSNDNNNNNNNNNNNNNNNNNNNNNNNNNNNNNIEELIKLIRPLIQKVRCNQFGIWTKNDKCIGMAVSPSSSYFNHSCIPNCESVRDGSDMTFKSLFPIKKGDQINISYLALDKSTKRRRDYLKFGYYFHCQCPRCNSTDIDPTGKLEDSLDNWISKFYCHQKKCTGLYYSKLKLSLQSLTNIDNHEIQLSCSTCNDQLIVNSNFYLNKPNY.

The SET domain maps to aspartate 6–leucine 311. An MYND-type zinc finger spans residues cysteine 51 to cysteine 95. Positions aspartate 205–asparagine 232 are disordered. The stretch at asparagine 216–arginine 243 forms a coiled coil.

The protein belongs to the class V-like SAM-binding methyltransferase superfamily.

Functionally, probable methyltransferase. The polypeptide is SET and MYND domain-containing protein DDB_G0273591 (Dictyostelium discoideum (Social amoeba)).